The chain runs to 273 residues: Ribosomal RNA small subunit methyltransferase A (273 aa).

Residues asparagine 18, leucine 20, glycine 45, glutamate 66, aspartate 91, and asparagine 113 each contribute to the S-adenosyl-L-methionine site.

This sequence belongs to the class I-like SAM-binding methyltransferase superfamily. rRNA adenine N(6)-methyltransferase family. RsmA subfamily.

It is found in the cytoplasm. It carries out the reaction adenosine(1518)/adenosine(1519) in 16S rRNA + 4 S-adenosyl-L-methionine = N(6)-dimethyladenosine(1518)/N(6)-dimethyladenosine(1519) in 16S rRNA + 4 S-adenosyl-L-homocysteine + 4 H(+). Its function is as follows. Specifically dimethylates two adjacent adenosines (A1518 and A1519) in the loop of a conserved hairpin near the 3'-end of 16S rRNA in the 30S particle. May play a critical role in biogenesis of 30S subunits. In Erwinia tasmaniensis (strain DSM 17950 / CFBP 7177 / CIP 109463 / NCPPB 4357 / Et1/99), this protein is Ribosomal RNA small subunit methyltransferase A.